Consider the following 895-residue polypeptide: Pentatricopeptide repeat-containing protein At1g74600, chloroplastic (895 aa).

A chloroplast-targeting transit peptide spans 1–71 (MNCLANESLN…CNLRTTKILQ (71 aa)). PPR repeat units lie at residues 83-113 (DVFL…IPQP), 114-148 (DVVS…GFEA), 149-183 (NEIS…GYFF), 184-214 (YEVV…SLSA), 215-249 (NVYC…FQKP), 250-280 (DSYT…VIKC), 284-314 (DVFV…IPNP), 315-349 (SVVS…GVEI), 350-384 (NNCT…GFYL), 385-415 (DSSV…LDDI), 417-451 (RQNI…GLRT), 452-483 (DEFS…GLVL), 484-514 (DLTV…IPFK), 515-549 (DNAC…GTSP), 550-584 (DEST…GIDK), 585-615 (GMDL…LPEL), 616-650 (DPVS…GFTM), 651-685 (DSFA…GLCT), 686-716 (EPSV…INGP), 717-751 (DLIA…GFKP), 752-787 (DKVT…GIEP), and 788-818 (ENRH…MHIK). Residues 824–895 (WGTLLAACKI…VQKEPGWSSV (72 aa)) form a type E motif; degenerate region.

The protein belongs to the PPR family. PCMP-E subfamily.

The protein localises to the plastid. It localises to the chloroplast. This is Pentatricopeptide repeat-containing protein At1g74600, chloroplastic (PCMP-E69) from Arabidopsis thaliana (Mouse-ear cress).